The primary structure comprises 441 residues: Capsid protein (441 aa).

The interval 26-63 (DSKKKQPIYQNSSESEESETENKNFIYDFSSEEDFEEP) is disordered. Residues 77 to 79 (KRK) carry the Nuclear localization signal motif. Residues 381–398 (CQCWLCHEEGHYANECPK) form a CCHC-type zinc finger.

It belongs to the caulimoviridae capsid protein family. As to quaternary structure, interacts (via nuclear localization signal) with host importin alpha.

It is found in the virion. It localises to the host nucleus. Self assembles to form an icosahedral capsid, about 50 nm in diameter, nm, composed of 420 subunits of the viral capsid protein. The capsid encapsulates the genomic dsDNA. Following virus entry into host cell, provides nuclear import of the viral genome. Virus particles do not enter the nucleus, but dock at the nuclear membrane through the interaction with host importins. The protein is Capsid protein of Soybean chlorotic mottle virus.